A 328-amino-acid polypeptide reads, in one-letter code: Tyrosine--tRNA ligase (328 aa).

Tyr33 is a binding site for L-tyrosine. The 'HIGH' region signature appears at 38 to 46 (PSGVLHIGH). L-tyrosine is bound by residues Tyr154, Gln158, Asp161, and Gln176. Residues 193–227 (EPPTSLHTPLIADLGTGRGKMSSSEGVTISMEDSR) form a disordered region. The 'KMSKS' region signature appears at 212–216 (KMSSS). Ser215 serves as a coordination point for ATP.

It belongs to the class-I aminoacyl-tRNA synthetase family. TyrS type 3 subfamily. In terms of assembly, homodimer.

The protein localises to the cytoplasm. The enzyme catalyses tRNA(Tyr) + L-tyrosine + ATP = L-tyrosyl-tRNA(Tyr) + AMP + diphosphate + H(+). Functionally, catalyzes the attachment of tyrosine to tRNA(Tyr) in a two-step reaction: tyrosine is first activated by ATP to form Tyr-AMP and then transferred to the acceptor end of tRNA(Tyr). The protein is Tyrosine--tRNA ligase of Halorubrum lacusprofundi (strain ATCC 49239 / DSM 5036 / JCM 8891 / ACAM 34).